Reading from the N-terminus, the 115-residue chain is NADH-ubiquinone oxidoreductase chain 3 (115 aa).

The next 3 helical transmembrane spans lie at 3–23, 55–75, and 86–106; these read LVMALLTNTALASLLVLIAFW, FFLVAITFLLFDLEVALLLPL, and TMLIMALTLISLLAISLAYEW.

This sequence belongs to the complex I subunit 3 family. In terms of assembly, core subunit of respiratory chain NADH dehydrogenase (Complex I) which is composed of 45 different subunits. Interacts with TMEM186. Interacts with TMEM242.

It localises to the mitochondrion inner membrane. The enzyme catalyses a ubiquinone + NADH + 5 H(+)(in) = a ubiquinol + NAD(+) + 4 H(+)(out). Core subunit of the mitochondrial membrane respiratory chain NADH dehydrogenase (Complex I) which catalyzes electron transfer from NADH through the respiratory chain, using ubiquinone as an electron acceptor. Essential for the catalytic activity of complex I. The polypeptide is NADH-ubiquinone oxidoreductase chain 3 (Hippopotamus amphibius (Hippopotamus)).